The primary structure comprises 243 residues: Small ribosomal subunit protein uS3 (243 aa).

N-acetylalanine is present on alanine 2. Serine 6 carries the phosphoserine; by PKC/PRKCD modification. Positions 21-92 (LNEFLTRELA…SVELYAEKVA (72 aa)) constitute a KH type-2 domain. Serine 35 is subject to Phosphoserine. Threonine 42 carries the phosphothreonine; by MAPK modification. Lysine 62 is modified (N6-acetyllysine). Asymmetric dimethylarginine; by PRMT1 occurs at positions 64, 65, and 67. Phosphothreonine; by PKB is present on threonine 70. Residue lysine 90 forms a Glycyl lysine isopeptide (Lys-Gly) (interchain with G-Cter in ubiquitin) linkage. Phosphoserine is present on serine 104. Position 132 is an N6-succinyllysine (lysine 132). A Glycyl lysine isopeptide (Lys-Gly) (interchain with G-Cter in ubiquitin) cross-link involves residue lysine 202. At serine 209 the chain carries Phosphoserine; by IKKB. Residue lysine 214 forms a Glycyl lysine isopeptide (Lys-Gly) (interchain with G-Cter in SUMO2); alternate linkage. Lysine 214 is covalently cross-linked (Glycyl lysine isopeptide (Lys-Gly) (interchain with G-Cter in ubiquitin); alternate). Residues 214–243 (KDEILPTTPISEQKGGKPEPPAMPQPVPTA) are disordered. Threonine 220 bears the Phosphothreonine mark. Threonine 221 carries the post-translational modification Phosphothreonine; by CDK1 and PKC/PRKCD. Residue serine 224 is modified to Phosphoserine. Residue lysine 230 forms a Glycyl lysine isopeptide (Lys-Gly) (interchain with G-Cter in SUMO2) linkage. The segment covering 231 to 243 (PEPPAMPQPVPTA) has biased composition (pro residues). Threonine 242 carries the phosphothreonine modification.

It belongs to the universal ribosomal protein uS3 family. Component of the 40S small ribosomal subunit. Identified in a IGF2BP1-dependent mRNP granule complex containing untranslated mRNAs. Interacts with HNRPD. Interacts with PRMT1; the interaction methylates RPS3. Interacts with SUMO1; the interaction sumoylates RPS3. Interacts with UBC9. Interacts with CDK1; the interaction phosphorylates RPS3. Interacts with PRKCD; the interaction phosphorylates RPS3. Interacts with PKB/AKT; the interaction phosphorylates RPS3. Interacts with E2F1; the interaction occurs in the absence of nerve growth factor and increases transcription of pro-apoptotic proteins BCL2L11/BIM and HRK/Dp5. Interacts with the base excision repair proteins APEX1 and OGG1; interaction with OGG1 increases OGG1 N-glycosylase activity. Interacts with UNG; the interaction increases the uracil excision activity of UNG1. Interacts with HSP90; the interaction prevents the ubiquitination and proteasome-dependent degradation of RPS3 and is suppressed by increased ROS levels. Interacts with TOM70; the interaction promotes translocation of RPS3 to the mitochondrion. Interacts (via N-terminus) with RELA (via N-terminus); the interaction enhances the DNA-binding activity of the NF-kappa-B p65-p50 complex. Interacts with NFKBIA; the interaction is direct and may bridge the interaction between RPS3 and RELA. Interacts with IKKB; the interaction phosphorylates RPS3 and enhances its translocation to the nucleus. Interacts (via KH domain) with MDM2 and TP53. Interacts with TRADD. Interacts with CRY1. Post-translationally, methylation by PRMT1 is required for import into the nucleolus and for ribosome assembly. Sumoylation by SUMO1 enhances protein stability through increased resistance to proteolysis. Sumoylation occurs at one or more of the three consensus sites, Lys-18, Lys-214 and Lys-230. In terms of processing, phosphorylation at Thr-221 by CDK1 occurs mainly in G2/M phase. Phosphorylation by PRKCD occurs on a non-ribosomal-associated form which results in translocation of RPS3 to the nucleus and enhances its endonuclease activity. Phosphorylated on Ser-209 by IKKB in response to activation of the NF-kappa-B p65-p50 complex which enhances the association of RPS3 with importin-alpha and mediates the nuclear translocation of RPS3. Phosphorylation by MAPK is required for translocation to the nucleus following exposure of cells to DNA damaging agents such as hydrogen peroxide. Phosphorylation by PKB/AKT mediates RPS3 nuclear translocation, enhances RPS3 endonuclease activity and suppresses RPS3-induced neuronal apoptosis. Post-translationally, ubiquitinated; ubiquitination is prevented by interaction with HSP90 which stabilizes the protein. Monoubiquitinated at Lys-214 by RNF10 and ZNF598 when a ribosome has stalled during translation of poly(A) sequences, leading to preclude synthesis of a long poly-lysine tail and initiate the ribosome quality control (RQC) pathway to degrade the potentially detrimental aberrant nascent polypeptide. Deubiquitinated at Lys-214 by USP10, preventing degradation by the proteasome and promoting 40S ribosome subunit recycling following ribosome dissociation. Ufmylated by UFL1.

It is found in the cytoplasm. The protein resides in the nucleus. It localises to the nucleolus. The protein localises to the mitochondrion inner membrane. Its subcellular location is the cytoskeleton. It is found in the spindle. The enzyme catalyses 2'-deoxyribonucleotide-(2'-deoxyribose 5'-phosphate)-2'-deoxyribonucleotide-DNA = a 3'-end 2'-deoxyribonucleotide-(2,3-dehydro-2,3-deoxyribose 5'-phosphate)-DNA + a 5'-end 5'-phospho-2'-deoxyribonucleoside-DNA + H(+). Component of the small ribosomal subunit. The ribosome is a large ribonucleoprotein complex responsible for the synthesis of proteins in the cell. Has endonuclease activity and plays a role in repair of damaged DNA. Cleaves phosphodiester bonds of DNAs containing altered bases with broad specificity and cleaves supercoiled DNA more efficiently than relaxed DNA. Displays high binding affinity for 7,8-dihydro-8-oxoguanine (8-oxoG), a common DNA lesion caused by reactive oxygen species (ROS). Has also been shown to bind with similar affinity to intact and damaged DNA. Stimulates the N-glycosylase activity of the base excision protein OGG1. Enhances the uracil excision activity of UNG1. Also stimulates the cleavage of the phosphodiester backbone by APEX1. When located in the mitochondrion, reduces cellular ROS levels and mitochondrial DNA damage. Has also been shown to negatively regulate DNA repair in cells exposed to hydrogen peroxide. Plays a role in regulating transcription as part of the NF-kappa-B p65-p50 complex where it binds to the RELA/p65 subunit, enhances binding of the complex to DNA and promotes transcription of target genes. Represses its own translation by binding to its cognate mRNA. Binds to and protects TP53/p53 from MDM2-mediated ubiquitination. Involved in spindle formation and chromosome movement during mitosis by regulating microtubule polymerization. Involved in induction of apoptosis through its role in activation of CASP8. Induces neuronal apoptosis by interacting with the E2F1 transcription factor and acting synergistically with it to up-regulate pro-apoptotic proteins BCL2L11/BIM and HRK/Dp5. Interacts with TRADD following exposure to UV radiation and induces apoptosis by caspase-dependent JNK activation. The chain is Small ribosomal subunit protein uS3 (RPS3) from Bos taurus (Bovine).